The primary structure comprises 502 residues: 4,4'-diapophytoene desaturase (4,4'-diaponeurosporene-forming) (502 aa).

5–17 (VIGAGVTGLAAAA) is a binding site for FAD.

Belongs to the carotenoid/retinoid oxidoreductase family. CrtN subfamily.

The catalysed reaction is 15-cis-4,4'-diapophytoene + 3 FAD + 3 H(+) = all-trans-4,4'-diaponeurosporene + 3 FADH2. Its pathway is carotenoid biosynthesis; staphyloxanthin biosynthesis; staphyloxanthin from farnesyl diphosphate: step 2/5. Functionally, involved in the biosynthesis of the yellow-orange carotenoid staphyloxanthin, which plays a role in the virulence via its protective function against oxidative stress. Catalyzes three successive dehydrogenation reactions that lead to the introduction of three double bonds into 4,4'-diapophytoene (dehydrosqualene), with 4,4'-diapophytofluene and 4,4'-diapo-zeta-carotene as intermediates, and 4,4'-diaponeurosporene (the major deep-yellow pigment in staphylococci strains) as the end product. In Staphylococcus aureus (strain USA300), this protein is 4,4'-diapophytoene desaturase (4,4'-diaponeurosporene-forming).